A 67-amino-acid chain; its full sequence is UPF0337 protein CC_0938 (67 aa).

The segment at 37-67 (AAQKAKGDLQNKVGKAQDKARRRDQALNARL) is disordered. Basic and acidic residues predominate over residues 41–61 (AKGDLQNKVGKAQDKARRRDQ).

This sequence belongs to the UPF0337 (CsbD) family.

This Caulobacter vibrioides (strain ATCC 19089 / CIP 103742 / CB 15) (Caulobacter crescentus) protein is UPF0337 protein CC_0938.